A 447-amino-acid chain; its full sequence is Elongation factor 1-alpha (447 aa).

Positions 5–230 (KIHISIVVIG…DQINEPKRPS (226 aa)) constitute a tr-type G domain. The interval 14-21 (GHVDSGKS) is G1. 14–21 (GHVDSGKS) lines the GTP pocket. Position 55 is an N6,N6-dimethyllysine (Lys55). Positions 70 to 74 (GITID) are G2. An N6,N6,N6-trimethyllysine modification is found at Lys79. The tract at residues 91-94 (DAPG) is G3. GTP is bound by residues 91 to 95 (DAPGH) and 153 to 156 (NKMD). Positions 153–156 (NKMD) are G4. Lys187 bears the N6,N6,N6-trimethyllysine mark. A G5 region spans residues 194–196 (SGF). N6-methyllysine is present on Lys261. At Glu289 the chain carries 5-glutamyl glycerylphosphorylethanolamine. Lys306 is subject to N6,N6,N6-trimethyllysine. Position 362 is a 5-glutamyl glycerylphosphorylethanolamine (Glu362). Lys396 is modified (N6,N6,N6-trimethyllysine).

Belongs to the TRAFAC class translation factor GTPase superfamily. Classic translation factor GTPase family. EF-Tu/EF-1A subfamily.

Its subcellular location is the cytoplasm. Its function is as follows. This protein promotes the GTP-dependent binding of aminoacyl-tRNA to the A-site of ribosomes during protein biosynthesis. This Hordeum vulgare (Barley) protein is Elongation factor 1-alpha.